Reading from the N-terminus, the 143-residue chain is Transcriptional regulator MraZ (143 aa).

2 consecutive SpoVT-AbrB domains span residues 5–47 and 76–119; these read EYEH…PRGV and AADM…SPRR.

Belongs to the MraZ family. Forms oligomers.

It localises to the cytoplasm. The protein resides in the nucleoid. This is Transcriptional regulator MraZ from Roseiflexus castenholzii (strain DSM 13941 / HLO8).